Reading from the N-terminus, the 365-residue chain is Putative ankyrin repeat protein R903 (365 aa).

ANK repeat units lie at residues 38–67 (NINSFFMIFVEQGNLSWVKILHSQGYDIRF), 68–97 (QNNEALKIACKYGYLEIVKYLYDHGCDIFI), 99–127 (NNFCLKIASERGHLEIVKYLYQNGYKFSN), 129–158 (SKPILDIAAANGHFEIIKYVRLLNPNNINK), 184–213 (KFKDNIYRATEYGNIEIIKKTWNKFCGNIT), 214–243 (VSNNLFKIAVVYGHLNIIKYMFKKGHRFPR), 245–273 (SNELIQIACGKGYLDIVKYLHKKGFSIVD), 275–298 (LLNIAGRFGHHDVVEYLYKRLKNV), 299–328 (NLQKVITITIENDYLEIVKFFVTKENNPDE), and 330–361 (RTYLILAHKHGHNRIIRYFDSLLIMTQQKLQS).

The protein is Putative ankyrin repeat protein R903 of Acanthamoeba polyphaga mimivirus (APMV).